The primary structure comprises 697 residues: Zinc finger protein 12 (697 aa).

K3 is covalently cross-linked (Glycyl lysine isopeptide (Lys-Gly) (interchain with G-Cter in SUMO2)). The KRAB domain maps to 8 to 79 (VSFKDVAVDF…EGEFLLQSYP (72 aa)). Residues K98, K179, K182, K209, K215, K224, K239, and K267 each participate in a glycyl lysine isopeptide (Lys-Gly) (interchain with G-Cter in SUMO2) cross-link. 2 consecutive C2H2-type zinc fingers follow at residues 269–291 (YECSECGKSFCKKSKFIIHQRTH) and 297–319 (YECNQCGKSFCQKGTLTVHQRTH). Glycyl lysine isopeptide (Lys-Gly) (interchain with G-Cter in SUMO2) cross-links involve residues K309, K323, K337, and K365. C2H2-type zinc fingers lie at residues 325–347 (YECNECGKNFYQKLHLIQHQRTH), 353–375 (YECSYCGKSFCQKTHLTQHQRTH), 381–403 (YVCHDCGKTFSQKSALNDHQKIH), 409–431 (YKCSECGKCFCRKSTLTTHLRTH), 437–459 (YECNECGKFFSRLSYLTVHYRTH), 465–487 (YECNECGKTFYLNSALMRHQRVH), 493–515 (YECNECGKLFSQLSYLTIHHRTH), and 521–543 (YECSECGKTFYQNSALCRHRRIH). Residues K544 and K547 each participate in a glycyl lysine isopeptide (Lys-Gly) (interchain with G-Cter in SUMO2) cross-link. C2H2-type zinc fingers lie at residues 549–571 (YECYICGKFFSQMSYLTIHHRIH), 577–599 (YECSECGKTFCQNSALNRHQRTH), 605–627 (YECYECGKCFSQMSYLTIHHRIH), 633–655 (FECNECGKAFSRMSYLTVHYRTH), and 661–683 (YECTECGKKFYHKSAFNSHQRIH).

Belongs to the krueppel C2H2-type zinc-finger protein family. Widely expressed in various adult tissues and embryonic developmental stages (isoform 3).

Its subcellular location is the nucleus. Transcriptional repressor which suppresses activation protein 1 (AP-1)- and serum response element (SRE)-mediated transcriptional activity. The protein is Zinc finger protein 12 (ZNF12) of Homo sapiens (Human).